The following is a 244-amino-acid chain: Diablo homolog, mitochondrial (244 aa).

A mitochondrion-targeting transit peptide spans methionine 1 to lysine 38. Residues alanine 50–glycine 54 carry the IAP-binding motif. A compositionally biased stretch (basic and acidic residues) spans aspartate 207–glycine 218. Residues aspartate 207–aspartate 244 are disordered. Residues proline 220–serine 229 are compositionally biased toward low complexity.

This sequence belongs to the Smac/DIABLO protein family. As to quaternary structure, homodimer.

Its subcellular location is the mitochondrion. In terms of biological role, promotes apoptosis. Acts by opposing the inhibitory activity of inhibitor of apoptosis proteins (IAP). This Xenopus tropicalis (Western clawed frog) protein is Diablo homolog, mitochondrial.